A 364-amino-acid chain; its full sequence is DNA polymerase IV (364 aa).

One can recognise a UmuC domain in the interval 6 to 194; the sequence is VFHIDFDYFY…LKIRDIPGIG (189 aa). Residues Asp-10 and Asp-111 each coordinate Mg(2+). Residue Glu-112 is part of the active site.

The protein belongs to the DNA polymerase type-Y family. Monomer. The cofactor is Mg(2+).

It localises to the cytoplasm. The enzyme catalyses DNA(n) + a 2'-deoxyribonucleoside 5'-triphosphate = DNA(n+1) + diphosphate. Its function is as follows. Poorly processive, error-prone DNA polymerase involved in untargeted mutagenesis. Copies undamaged DNA at stalled replication forks, which arise in vivo from mismatched or misaligned primer ends. These misaligned primers can be extended by PolIV. Exhibits no 3'-5' exonuclease (proofreading) activity. May be involved in translesional synthesis. The polypeptide is DNA polymerase IV (Nitrosopumilus maritimus (strain SCM1)).